A 415-amino-acid polypeptide reads, in one-letter code: Serine hydroxymethyltransferase (415 aa).

Residues Leu-117 and 121 to 123 each bind (6S)-5,6,7,8-tetrahydrofolate; that span reads GHL. At Lys-226 the chain carries N6-(pyridoxal phosphate)lysine. Glu-241 is a binding site for (6S)-5,6,7,8-tetrahydrofolate.

It belongs to the SHMT family. Homodimer. It depends on pyridoxal 5'-phosphate as a cofactor.

Its subcellular location is the cytoplasm. The catalysed reaction is (6R)-5,10-methylene-5,6,7,8-tetrahydrofolate + glycine + H2O = (6S)-5,6,7,8-tetrahydrofolate + L-serine. The protein operates within one-carbon metabolism; tetrahydrofolate interconversion. It functions in the pathway amino-acid biosynthesis; glycine biosynthesis; glycine from L-serine: step 1/1. Its function is as follows. Catalyzes the reversible interconversion of serine and glycine with tetrahydrofolate (THF) serving as the one-carbon carrier. This reaction serves as the major source of one-carbon groups required for the biosynthesis of purines, thymidylate, methionine, and other important biomolecules. Also exhibits THF-independent aldolase activity toward beta-hydroxyamino acids, producing glycine and aldehydes, via a retro-aldol mechanism. The chain is Serine hydroxymethyltransferase from Bacillus subtilis (strain 168).